The chain runs to 459 residues: Serine--tRNA ligase (459 aa).

Residue 254–256 coordinates L-serine; sequence TAE. Residues 285 to 287 and valine 301 contribute to the ATP site; that span reads RKE. Glutamate 308 provides a ligand contact to L-serine. Residue 372-375 coordinates ATP; it reads EMVS. Threonine 408 contacts L-serine.

Belongs to the class-II aminoacyl-tRNA synthetase family. Type-1 seryl-tRNA synthetase subfamily. Homodimer. The tRNA molecule binds across the dimer.

Its subcellular location is the cytoplasm. It carries out the reaction tRNA(Ser) + L-serine + ATP = L-seryl-tRNA(Ser) + AMP + diphosphate + H(+). The enzyme catalyses tRNA(Sec) + L-serine + ATP = L-seryl-tRNA(Sec) + AMP + diphosphate + H(+). It participates in aminoacyl-tRNA biosynthesis; selenocysteinyl-tRNA(Sec) biosynthesis; L-seryl-tRNA(Sec) from L-serine and tRNA(Sec): step 1/1. Catalyzes the attachment of serine to tRNA(Ser). Is also able to aminoacylate tRNA(Sec) with serine, to form the misacylated tRNA L-seryl-tRNA(Sec), which will be further converted into selenocysteinyl-tRNA(Sec). The chain is Serine--tRNA ligase from Staphylothermus marinus (strain ATCC 43588 / DSM 3639 / JCM 9404 / F1).